Consider the following 79-residue polypeptide: Exodeoxyribonuclease 7 small subunit (79 aa).

It belongs to the XseB family. As to quaternary structure, heterooligomer composed of large and small subunits.

It is found in the cytoplasm. It catalyses the reaction Exonucleolytic cleavage in either 5'- to 3'- or 3'- to 5'-direction to yield nucleoside 5'-phosphates.. Bidirectionally degrades single-stranded DNA into large acid-insoluble oligonucleotides, which are then degraded further into small acid-soluble oligonucleotides. This Lactococcus lactis subsp. cremoris (strain MG1363) protein is Exodeoxyribonuclease 7 small subunit.